Here is a 130-residue protein sequence, read N- to C-terminus: Small ribosomal subunit protein uS9 (130 aa).

This sequence belongs to the universal ribosomal protein uS9 family.

The polypeptide is Small ribosomal subunit protein uS9 (Aliivibrio salmonicida (strain LFI1238) (Vibrio salmonicida (strain LFI1238))).